We begin with the raw amino-acid sequence, 785 residues long: Probable ATP-dependent RNA helicase ddx17 (785 aa).

Low complexity-rich tracts occupy residues M1–G11, S18–S37, S49–S95, and G105–S177. The tract at residues M1 to S233 is disordered. Polar residues predominate over residues K178 to G191. Over residues P192–S233 the composition is skewed to low complexity. The short motif at M384–S412 is the Q motif element. One can recognise a Helicase ATP-binding domain in the interval W415–V590. Position 428–435 (A428–T435) interacts with ATP. Positions D538–D541 match the DEAD box motif. The 162-residue stretch at N602–S763 folds into the Helicase C-terminal domain. The span at V764–K774 shows a compositional bias: polar residues. Residues V764 to Y785 form a disordered region.

Belongs to the DEAD box helicase family. DDX5/DBP2 subfamily.

The protein localises to the cytoplasm. It localises to the nucleus. It catalyses the reaction ATP + H2O = ADP + phosphate + H(+). Its function is as follows. Probable ATP-dependent RNA helicase which may be involved nonsense-mediated mRNA decay and ribosome biogenesis through rRNA processing. In Dictyostelium discoideum (Social amoeba), this protein is Probable ATP-dependent RNA helicase ddx17 (ddx17).